The sequence spans 911 residues: Epithelial discoidin domain-containing receptor 1 (911 aa).

The first 19 residues, 1–19 (MGTGTLSSLLLLLLLVTIG), serve as a signal peptide directing secretion. Over 22–415 (DMKGHFDPAK…VAKAEGSPTA (394 aa)) the chain is Extracellular. The F5/8 type C domain occupies 32-186 (CRYALGMQDR…VCLRVELYGC (155 aa)). Disulfide bonds link C32/C186 and C75/C178. The DS-like domain stretch occupies residues 193–369 (LSYTAPVGQT…LFSEISFISD (177 aa)). Positions 213, 232, 235, 237, 255, and 257 each coordinate Ca(2+). N-linked (GlcNAc...) asparagine glycosylation occurs at N213. A glycan (N-linked (GlcNAc...) asparagine) is linked at N262. An intrachain disulfide couples C305 to C350. S362 and E363 together coordinate Ca(2+). 2 N-linked (GlcNAc...) asparagine glycosylation sites follow: N372 and N392. A helical membrane pass occupies residues 416–436 (ILIGCLVAIILLLLLIIALML). The Cytoplasmic segment spans residues 437-911 (WRLHWRRLLS…FLADDALNTV (475 aa)). The segment at 468–496 (ILINNRPGPREPPPYQEPRPRGTPPHSAP) is disordered. Positions 477 to 494 (REPPPYQEPRPRGTPPHS) are enriched in pro residues. Positions 479–482 (PPPY) match the PPxY motif motif. Phosphotyrosine; by autocatalysis occurs at positions 482, 511, and 518. Residues 608–903 (LRFKEKLGEG…PPFAQLHRFL (296 aa)) enclose the Protein kinase domain. Residues 614–622 (LGEGQFGEV) and K653 contribute to the ATP site. At Y738 the chain carries Phosphotyrosine; by autocatalysis. D764 functions as the Proton acceptor in the catalytic mechanism. A phosphotyrosine; by autocatalysis mark is found at Y790, Y794, and Y795.

The protein belongs to the protein kinase superfamily. Tyr protein kinase family. Insulin receptor subfamily. In terms of assembly, homodimer. Interacts (via PPxY motif) with WWC1 (via WW domains) in a collagen-regulated manner. Forms a tripartite complex with WWC1 and PRKCZ, but predominantly in the absence of collagen. Interacts (tyrosine phosphorylated) with SHC1. Interacts with SRC. Interacts with MYH9. Interacts with CDH1. Interacts with PTPN11. Interacts with NCK2. Post-translationally, autophosphorylated in response to fibrillar collagen binding. As to expression, detected in the cochlea and the organ of Corti in the inner ear. Isoform 1 is predominant and is expressed in developing embryo and adult brain. Isoform 2 is expressed in various epithelial cells.

It is found in the cell membrane. The catalysed reaction is L-tyrosyl-[protein] + ATP = O-phospho-L-tyrosyl-[protein] + ADP + H(+). In terms of biological role, tyrosine kinase that functions as a cell surface receptor for fibrillar collagen and regulates cell attachment to the extracellular matrix, remodeling of the extracellular matrix, cell migration, differentiation, survival and cell proliferation. Collagen binding triggers a signaling pathway that involves SRC and leads to the activation of MAP kinases. Regulates remodeling of the extracellular matrix by up-regulation of the matrix metalloproteinases MMP2, MMP7 and MMP9, and thereby facilitates cell migration and wound healing, but also tumor cell invasion. Promotes smooth muscle cell migration, and thereby contributes to arterial wound healing. Phosphorylates PTPN11. Required for normal blastocyst implantation during pregnancy, for normal mammary gland differentiation and normal lactation. Required for normal ear morphology and normal hearing. The sequence is that of Epithelial discoidin domain-containing receptor 1 (Ddr1) from Mus musculus (Mouse).